We begin with the raw amino-acid sequence, 809 residues long: Leucine--tRNA ligase (809 aa).

Residues 40–50 (PYPSGRIHMGH) carry the 'HIGH' region motif. The 'KMSKS' region signature appears at 579–583 (KMSKS). Residue K582 coordinates ATP.

This sequence belongs to the class-I aminoacyl-tRNA synthetase family.

The protein localises to the cytoplasm. The catalysed reaction is tRNA(Leu) + L-leucine + ATP = L-leucyl-tRNA(Leu) + AMP + diphosphate. The chain is Leucine--tRNA ligase from Campylobacter jejuni subsp. jejuni serotype O:23/36 (strain 81-176).